A 747-amino-acid chain; its full sequence is RNA polymerase II assembly factor rtp1 (747 aa).

HEAT repeat units follow at residues 37-75 (NYFLNLLEEISKLDTDQPLSVTSLRCLQLFVHLTFLLGV), 103-141 (QIYNILLPLLLTPSLLQGPLNLHYADLLLLHLYLLNCHE), 320-358 (DIIRICESCVPSLLHLQENTTLRSKVQDILLRIISVCGT), 381-418 (SQLAMFLPNLLEIWVQQPPDKRLELLELVQYALSNVDS), 459-485 (EENEEILLVLLNIISSVIGRNAELDLE), 486-523 (NPISSLLPALEQLSNYSNREISDLAKDVYKTLIQSKDD), and 557-594 (INPVRVLHVLINLLRDENSYVHLNVISAVVSLCDKYDD).

The protein belongs to the Tango6 family. As to quaternary structure, interacts with RNA polymerase II subunits. Interacts with nuclear pore complex subunits.

The protein localises to the cytoplasm. It localises to the nucleus. In terms of biological role, required for the cytoplasmic assembly and the nuclear import of RNA polymerase II. In Schizosaccharomyces pombe (strain 972 / ATCC 24843) (Fission yeast), this protein is RNA polymerase II assembly factor rtp1.